The following is a 123-amino-acid chain: uncharacterized protein (123 aa).

This is an uncharacterized protein from Homo sapiens (Human).